The sequence spans 240 residues: Sugar fermentation stimulation protein homolog (240 aa).

It belongs to the SfsA family.

In Methanothermobacter thermautotrophicus (strain ATCC 29096 / DSM 1053 / JCM 10044 / NBRC 100330 / Delta H) (Methanobacterium thermoautotrophicum), this protein is Sugar fermentation stimulation protein homolog.